Consider the following 356-residue polypeptide: Sorbitol dehydrogenase (356 aa).

Position 44 (Cys44) interacts with Zn(2+). A substrate-binding site is contributed by Tyr50. His69 and Glu70 together coordinate Zn(2+). Glu155 contributes to the substrate binding site. Ile183, Asp203, and Arg208 together coordinate NAD(+). A phosphoserine mark is found at Ser210 and Ser224. Residues 272–274 (VGL) and 296–298 (VFR) each bind NAD(+). Substrate contacts are provided by Arg298 and Tyr299.

Belongs to the zinc-containing alcohol dehydrogenase family. As to quaternary structure, homotetramer. Zn(2+) serves as cofactor. Expressed in lens.

The protein resides in the mitochondrion membrane. Its subcellular location is the cell projection. It localises to the cilium. It is found in the flagellum. It carries out the reaction xylitol + NAD(+) = D-xylulose + NADH + H(+). It catalyses the reaction keto-D-fructose + NADH + H(+) = D-sorbitol + NAD(+). The enzyme catalyses L-iditol + NAD(+) = keto-L-sorbose + NADH + H(+). Its activity is regulated as follows. Inhibited in vitro by metal chelators such as EDTA and 1,10-phenanthroline. Polyol dehydrogenase that catalyzes the reversible NAD(+)-dependent oxidation of various sugar alcohols. Is mostly active with xylitol, D-sorbitol (D-glucitol) and L-iditol as substrates, leading to the C2-oxidized products D-xylulose, D-fructose and L-sorbose, respectively. Is a key enzyme in the polyol pathway that interconverts glucose and fructose via sorbitol, which constitutes an important alternate route for glucose metabolism. May play a role in sperm motility by using sorbitol as an alternative energy source for sperm motility. Cannot use NADP(+) as the electron acceptor. Has no activity on ethanol, methanol, glycerol, galactitol and fructose 6-phosphate. The chain is Sorbitol dehydrogenase (SORD) from Bos taurus (Bovine).